A 186-amino-acid chain; its full sequence is Large ribosomal subunit protein uL5 (186 aa).

Belongs to the universal ribosomal protein uL5 family. Part of the 50S ribosomal subunit; part of the 5S rRNA/L5/L18/L25 subcomplex. Contacts the 5S rRNA and the P site tRNA. Forms a bridge to the 30S subunit in the 70S ribosome.

This is one of the proteins that bind and probably mediate the attachment of the 5S RNA into the large ribosomal subunit, where it forms part of the central protuberance. In the 70S ribosome it contacts protein S13 of the 30S subunit (bridge B1b), connecting the 2 subunits; this bridge is implicated in subunit movement. Contacts the P site tRNA; the 5S rRNA and some of its associated proteins might help stabilize positioning of ribosome-bound tRNAs. The sequence is that of Large ribosomal subunit protein uL5 from Legionella pneumophila subsp. pneumophila (strain Philadelphia 1 / ATCC 33152 / DSM 7513).